Here is a 501-residue protein sequence, read N- to C-terminus: Circadian clock oscillator protein KaiC (501 aa).

2 KaiC domains span residues 1-232 (MQVQ…ITVF) and 246-501 (IRIS…REKK). Residues glycine 34, threonine 35, glycine 36, lysine 37, threonine 38, serine 74, lysine 209, leucine 210, arginine 211, threonine 213, histidine 215, threonine 275, glycine 276, threonine 277, glycine 278, lysine 279, and threonine 280 each coordinate ATP. Position 38 (threonine 38) interacts with Mg(2+). 2 residues coordinate Mg(2+): threonine 280 and glutamate 303. An ATP-binding site is contributed by tryptophan 316. Phosphoserine; by autocatalysis is present on serine 416. At threonine 417 the chain carries Phosphothreonine; by autocatalysis. ATP-binding residues include arginine 436, lysine 442, methionine 443, arginine 444, serine 446, histidine 448, and lysine 450.

It belongs to the KaiC family. In terms of assembly, homohexamer; hexamerization is dependent on ATP-binding. Component of the KaiBC complex. KaiC interacts with SasA, activating its autokinase function and leading to RpaA activation. It depends on Mg(2+) as a cofactor. Phosphorylated on serine and threonine residues by autocatalysis. Has a 4 step phosphorylation cycle; the autokinase acts first on Thr-417, then Ser-416. When Ser-416 is modified KaiC switches to an autophosphatase mode, acting first on phospho-Thr-417 then phospho-Ser-416.

It catalyses the reaction L-seryl-[protein] + ATP = O-phospho-L-seryl-[protein] + ADP + H(+). The catalysed reaction is L-threonyl-[protein] + ATP = O-phospho-L-threonyl-[protein] + ADP + H(+). The enzyme catalyses ATP + H2O = ADP + phosphate + H(+). In terms of biological role, central component of the KaiBC oscillator complex, which constitutes the main circadian regulator in cyanobacteria. Its composition changes during the circadian cycle to control KaiC phosphorylation. Autophosphorylates and has a weak ATPase activity; ATPase activity defines the circadian period. The chain is Circadian clock oscillator protein KaiC from Prochlorococcus marinus (strain SARG / CCMP1375 / SS120).